The sequence spans 210 residues: Ras-related protein Rab-8 (210 aa).

15–22 (GDSGVGKT) is a GTP binding site. Positions 37–45 (FISTIGIDF) match the Effector region motif. GTP is bound by residues 63–67 (DTAGQ) and 121–124 (NKCD). Residue Cys207 is modified to Cysteine methyl ester. Cys207 is lipidated: S-geranylgeranyl cysteine. Positions 208-210 (SLL) are cleaved as a propeptide — removed in mature form.

Belongs to the small GTPase superfamily. Rab family.

The protein resides in the cell membrane. This chain is Ras-related protein Rab-8, found in Diplobatis ommata (Ocellated electric ray).